The primary structure comprises 549 residues: Copalyl diphosphate synthase (549 aa).

The DXDDTA motif motif lies at 321–326 (DADDTA). Positions 451–457 (QRDDGSW) match the QXXDGSW motif motif.

Belongs to the terpene synthase family. It depends on Mg(2+) as a cofactor.

The enzyme catalyses (2E,6E,10E)-geranylgeranyl diphosphate = (+)-copalyl diphosphate. Its function is as follows. Involved in the biosynthesis of the labdane-type bicyclic diterpene labda-8(17),12(E),14-triene. Catalyzes the conversion of geranylgeranyl diphosphate (GGDP) into (+)-copalyl diphosphate. The polypeptide is Copalyl diphosphate synthase (Streptomyces anulatus (Streptomyces chrysomallus)).